The following is a 293-amino-acid chain: Ribosomal protein L11 methyltransferase (293 aa).

S-adenosyl-L-methionine-binding residues include T145, G166, D188, and N230.

The protein belongs to the methyltransferase superfamily. PrmA family.

It is found in the cytoplasm. It carries out the reaction L-lysyl-[protein] + 3 S-adenosyl-L-methionine = N(6),N(6),N(6)-trimethyl-L-lysyl-[protein] + 3 S-adenosyl-L-homocysteine + 3 H(+). Methylates ribosomal protein L11. In Shewanella frigidimarina (strain NCIMB 400), this protein is Ribosomal protein L11 methyltransferase.